A 318-amino-acid polypeptide reads, in one-letter code: Probable RNA methyltransferase At5g51130 (318 aa).

Disordered stretches follow at residues 1-61 (MGRD…NQEV) and 146-184 (NSTKPSEKKSSSEGADGVHGSKEPSVSLSNGEAKADSAE). Positions 16-34 (RSNENEKSVEKVVANEEKV) are enriched in basic and acidic residues. Over residues 37-52 (QQKQKQQQGQQGNCNQ) the composition is skewed to low complexity. Residues 82-318 (DPRLKVLKKE…FDRQILAFQK (237 aa)) form the Bin3-type SAM domain.

Belongs to the methyltransferase superfamily.

Probable RNA methyltransferase. This Arabidopsis thaliana (Mouse-ear cress) protein is Probable RNA methyltransferase At5g51130.